The sequence spans 215 residues: Ras-related protein Rab-14 (215 aa).

Ala2 carries the N-acetylalanine modification. Residues Gly21, Val22, Gly23, Lys24, Ser25, Cys26, Ala38, Asp39, Cys40, His42, and Thr43 each contribute to the GTP site. A Mg(2+)-binding site is contributed by Ser25. The Switch 1 signature appears at 42-47 (HTIGVE). Residues Thr43 and Asp66 each contribute to the Mg(2+) site. A Switch 2 motif is present at residues 68–77 (AGQERFRAVT). GTP-binding residues include Gly69, Asn124, Lys125, Asp127, Ala155, and Lys156. Residues 188 to 215 (SGVQHKPSAPQGGRLTSEPQPQREGCGC) form a disordered region. 2 S-geranylgeranyl cysteine lipidation sites follow: Cys213 and Cys215. Cysteine methyl ester is present on Cys215.

This sequence belongs to the small GTPase superfamily. Rab family. Mg(2+) serves as cofactor.

Its subcellular location is the recycling endosome. The protein resides in the early endosome membrane. The protein localises to the golgi apparatus membrane. It is found in the golgi apparatus. It localises to the trans-Golgi network membrane. Its subcellular location is the cytoplasmic vesicle. The protein resides in the phagosome. The catalysed reaction is GTP + H2O = GDP + phosphate + H(+). Its activity is regulated as follows. Regulated by guanine nucleotide exchange factors (GEFs) including DENND6A and DENND6B which promote the exchange of bound GDP for free GTP. Regulated by GTPase activating proteins (GAPs) which increase the GTP hydrolysis activity. Inhibited by GDP dissociation inhibitors (GDIs) which prevent Rab-GDP dissociation. Its function is as follows. The small GTPases Rab are key regulators of intracellular membrane trafficking, from the formation of transport vesicles to their fusion with membranes. Rabs cycle between an inactive GDP-bound form and an active GTP-bound form that is able to recruit to membranes different set of downstream effectors directly responsible for vesicle formation, movement, tethering and fusion. Involved in membrane trafficking between the Golgi complex and endosomes during early embryonic development. Regulates the Golgi to endosome transport of FGFR-containing vesicles during early development, a key process for developing basement membrane and epiblast and primitive endoderm lineages during early postimplantation development. May act by modulating the kinesin KIF16B-cargo association to endosomes. Regulates, together with its guanine nucleotide exchange factor DENND6A, the specific endocytic transport of ADAM10, N-cadherin/CDH2 shedding and cell-cell adhesion. Mediates endosomal tethering and fusion through the interaction with RUFY1 and RAB4B. Interaction with RAB11FIP1 may function in the process of neurite formation. This is Ras-related protein Rab-14 (RAB14) from Gallus gallus (Chicken).